Consider the following 276-residue polypeptide: Syntaxin-12 (276 aa).

Ser-2 carries the post-translational modification N-acetylserine. The Cytoplasmic portion of the chain corresponds to 2–248; it reads SYGPLDMYRN…RAAYYQKKSR (247 aa). A coiled-coil region spans residues 33-131; that stretch reads IQRISQATAQ…RRVSEKEKES (99 aa). Phosphoserine occurs at positions 139, 142, 218, and 225. Positions 178-240 constitute a t-SNARE coiled-coil homology domain; sequence LELIKERETA…ERATEQLQRA (63 aa). Residues 249 to 269 form a helical; Anchor for type IV membrane protein membrane-spanning segment; the sequence is KKMCILVLVLSVIIVILGLII. The Vesicular segment spans residues 270 to 276; it reads WLVYKTK.

This sequence belongs to the syntaxin family. Associates with the BLOC-1 complex. Interacts with BLOC1S6. Interacts with NAPA and SNAP23. Identified in a complex containing STX6, STX12, VAMP4 and VTI1A. Interacts with GRIPAP1. Forms a complex with GRIP1, GRIA2 and NSG1; controls the intracellular fate of AMPAR and the endosomal sorting of the GRIA2 subunit toward recycling and membrane targeting. Interacts with NSG1. Interacts with TPC1. Interacts (via N-terminus) with VPS13B.

The protein localises to the endosome membrane. It localises to the golgi apparatus membrane. Its subcellular location is the endomembrane system. The protein resides in the early endosome membrane. It is found in the recycling endosome membrane. Functionally, SNARE promoting fusion of transport vesicles with target membranes. Together with SNARE STX6, promotes movement of vesicles from endosomes to the cell membrane, and may therefore function in the endocytic recycling pathway. Through complex formation with GRIP1, GRIA2 and NSG1 controls the intracellular fate of AMPAR and the endosomal sorting of the GRIA2 subunit toward recycling and membrane targeting. This Pongo abelii (Sumatran orangutan) protein is Syntaxin-12 (STX12).